Reading from the N-terminus, the 87-residue chain is Selenoprotein W (87 aa).

A cross-link (cysteinyl-selenocysteine (Cys-Sec); redox-active) is located at residues 10–13; the sequence is CGAU. A non-standard amino acid (selenocysteine) is located at residue Sec13. Cys37 bears the S-glutathionyl cysteine mark.

This sequence belongs to the SelWTH family. Selenoprotein W subfamily. In terms of assembly, interacts with DPYSL2, PRDX1, YWHAB, YWHAG, HSP70 and HSP90. As to expression, highest levels detected in skeletal muscle, tongue, heart and brain. Expressed at significantly higher levels in female skeletal muscle than in male and at slightly higher levels in female cardiac muscle than in male (at protein level). Also detected at low levels in liver.

The protein resides in the cytoplasm. In terms of biological role, plays a role as a glutathione (GSH)-dependent antioxidant. May be involved in a redox-related process. May play a role in the myopathies of selenium deficiency. The chain is Selenoprotein W from Macaca mulatta (Rhesus macaque).